Consider the following 287-residue polypeptide: Leucine-rich repeat-containing protein 72 (287 aa).

LRR repeat units lie at residues 46 to 67 (DVFE…SRFK), 68 to 89 (KLKY…TRNY), 90 to 111 (CLTE…HYLP), and 112 to 133 (SLHI…VKEL). An LRRCT domain is found at 147–185 (NPLCQYNLYRLYIIYHLPGVELLDRNQVTEKERRSMITI).

This Homo sapiens (Human) protein is Leucine-rich repeat-containing protein 72 (LRRC72).